Reading from the N-terminus, the 71-residue chain is ATP synthase subunit c (71 aa).

Helical transmembrane passes span 5–25 (VLAAGIAVLSGIGAGVGIGIA) and 46–66 (FFILGAALCETTAIYGLVMAF).

Belongs to the ATPase C chain family. In terms of assembly, F-type ATPases have 2 components, F(1) - the catalytic core - and F(0) - the membrane proton channel. F(1) has five subunits: alpha(3), beta(3), gamma(1), delta(1), epsilon(1). F(0) has three main subunits: a(1), b(2) and c(10-14). The alpha and beta chains form an alternating ring which encloses part of the gamma chain. F(1) is attached to F(0) by a central stalk formed by the gamma and epsilon chains, while a peripheral stalk is formed by the delta and b chains.

The protein localises to the cell membrane. Its function is as follows. F(1)F(0) ATP synthase produces ATP from ADP in the presence of a proton or sodium gradient. F-type ATPases consist of two structural domains, F(1) containing the extramembraneous catalytic core and F(0) containing the membrane proton channel, linked together by a central stalk and a peripheral stalk. During catalysis, ATP synthesis in the catalytic domain of F(1) is coupled via a rotary mechanism of the central stalk subunits to proton translocation. Key component of the F(0) channel; it plays a direct role in translocation across the membrane. A homomeric c-ring of between 10-14 subunits forms the central stalk rotor element with the F(1) delta and epsilon subunits. This is ATP synthase subunit c from Clostridium beijerinckii (strain ATCC 51743 / NCIMB 8052) (Clostridium acetobutylicum).